A 416-amino-acid chain; its full sequence is D-amino acid dehydrogenase 2 (416 aa).

3–17 (ITVLGAGVVGTAAAY) contacts FAD.

It belongs to the DadA oxidoreductase family. FAD serves as cofactor.

The catalysed reaction is a D-alpha-amino acid + A + H2O = a 2-oxocarboxylate + AH2 + NH4(+). Functionally, oxidative deamination of D-amino acids. In Mesorhizobium japonicum (strain LMG 29417 / CECT 9101 / MAFF 303099) (Mesorhizobium loti (strain MAFF 303099)), this protein is D-amino acid dehydrogenase 2 (dadA2).